The primary structure comprises 217 residues: NADPH-dependent 3-demethoxyubiquinone 3-hydroxylase, mitochondrial (217 aa).

A mitochondrion-targeting transit peptide spans 1 to 35 (MSCAGAAAAPRLWRLRPGARRSLSAYGRRTSVRFR). The segment at 11-29 (RLWRLRPGARRSLSAYGRR) is required for nuclear localization. Tandem repeats lie at residues 48–129 (AVDR…TALL) and 130–217 (GKEG…SERL). Positions 48 to 217 (AVDRIIRVDH…RVAIYLSERL (170 aa)) are 2 X approximate tandem repeats. Residue arginine 51 participates in NADH binding. 6 residues coordinate Fe cation: glutamate 60, glutamate 90, histidine 93, glutamate 142, glutamate 178, and histidine 181. Tyrosine 212 and arginine 216 together coordinate NADH.

It belongs to the COQ7 family. Component of a multi-subunit COQ enzyme complex. Interacts with COQ8B and COQ6. Interacts with COQ9. Fe cation is required as a cofactor. In terms of tissue distribution, expressed dominantly in heart and skeletal muscle.

It is found in the mitochondrion inner membrane. Its subcellular location is the mitochondrion. It localises to the nucleus. The protein localises to the chromosome. The enzyme catalyses a 5-methoxy-2-methyl-3-(all-trans-polyprenyl)benzoquinone + NADH + O2 = a 3-demethylubiquinone + NAD(+) + H2O. Its pathway is cofactor biosynthesis; ubiquinone biosynthesis. Catalyzes the hydroxylation of the 5-methoxy-2-methyl-3-(all-trans-polyprenyl)benzoquinone at the C6 position and participates in the biosynthesis of ubiquinone. Catalyzes the reaction through a substrate-mediated reduction pathway, whereby NADH shuttles electrons to 5-methoxy-2-methyl-3-(all-trans-decaprenyl)benzoquinone, which then transfers the electrons to the two Fe(3+) centers. The binding of 5-methoxy-2-methyl-3-(all-trans-polyprenyl)benzoquinone (DMQn) mediates reduction of the diiron center by nicotinamide adenine dinucleotide (NADH) and initiates oxygen activation for subsequent DMQ hydroxylation. The physiological substrates are 5-methoxy-2-methyl-3-(all-trans-nonaprenyl)benzoquinone (DMQ(9)) and 5-methoxy-2-methyl-3-(all-trans-decaprenyl)benzoquinone (DMQ(10)), however in vitro the enzyme does not have any specificity concerning the length of the polyprenyl tail, and accepts tails of various lengths with similar efficiency. Also has a structural role in the COQ enzyme complex, stabilizing other COQ polypeptides. Involved in lifespan determination in a ubiquinone-independent manner. Plays a role in modulating mitochondrial stress responses, acting in the nucleus, perhaps via regulating gene expression, independent of its characterized mitochondrial function in ubiquinone biosynthesis. This Homo sapiens (Human) protein is NADPH-dependent 3-demethoxyubiquinone 3-hydroxylase, mitochondrial.